We begin with the raw amino-acid sequence, 212 residues long: V-type ATP synthase subunit E (212 aa).

Belongs to the V-ATPase E subunit family.

Produces ATP from ADP in the presence of a proton gradient across the membrane. This is V-type ATP synthase subunit E from Nitrosococcus oceani (strain ATCC 19707 / BCRC 17464 / JCM 30415 / NCIMB 11848 / C-107).